Reading from the N-terminus, the 423-residue chain is Progestin and adipoQ receptor-like protein 1 (423 aa).

The Cytoplasmic segment spans residues 1–201 (MDPDEVNQAL…KSIWSLHTET (201 aa)). Residues 54–140 (VVSPTNSDDE…DEDELEVDVK (87 aa)) are disordered. Positions 60 to 69 (SDDEEGEFCS) are enriched in acidic residues. Positions 104-114 (TVLRYRRKKGG) are enriched in basic residues. A helical transmembrane segment spans residues 202–222 (GNIWTHLIGCVAFFLLACWFL). Residues 223 to 234 (TRPDNHIQFQEK) are Extracellular-facing. The helical transmembrane segment at 235-252 (VVFSFFFAGAVSVSDSRS) threads the bilayer. Over 253 to 288 (PSTPSRVIRSTSSRYSANSTIWESRCSLSARLFQPK) the chain is Cytoplasmic. A helical transmembrane segment spans residues 289–309 (ITYIAMVCVLGIGAIVVSLWD). Residues 310-320 (KFSESKYRPVR) are Extracellular-facing. Residues 321–341 (AAVFVGMGCSGVIPTIHYIIT) traverse the membrane as a helical segment. Over 342 to 351 (DGVHSLFADN) the chain is Cytoplasmic. A helical membrane pass occupies residues 352–372 (SFHWLLLMAFLYLLGAALYAT). At 373–392 (RTPERFFPGKCDIWFQSHQL) the chain is on the extracellular side. A helical membrane pass occupies residues 393-413 (FHTCVVIAAFVHYYGISEMAF). At 414 to 423 (ARLNEQCPVR) the chain is on the cytoplasmic side.

Belongs to the ADIPOR family.

Its subcellular location is the membrane. In terms of biological role, probable receptor, which may be involved in metabolic pathways that regulate lipid metabolism such as fatty acid oxidation. The protein is Progestin and adipoQ receptor-like protein 1 of Caenorhabditis briggsae.